We begin with the raw amino-acid sequence, 215 residues long: Ceramide-1-phosphate transfer protein (215 aa).

An N-acylsphingoid base 1-phosphate-binding residues include Asp-57, Lys-61, Arg-107, Arg-111, and His-151.

Belongs to the GLTP family.

It is found in the cytoplasm. It localises to the cytosol. Its subcellular location is the golgi apparatus. The protein localises to the trans-Golgi network membrane. The protein resides in the cell membrane. It is found in the endosome membrane. It localises to the nucleus outer membrane. It carries out the reaction N-(hexadecanoyl)-sphing-4-enine-1-phosphate(in) = N-(hexadecanoyl)-sphing-4-enine-1-phosphate(out). The enzyme catalyses N-(9Z-octadecenoyl)-sphing-4-enine-1-phosphate(in) = N-(9Z-octadecenoyl)-sphing-4-enine-1-phosphate(out). Functionally, mediates the intracellular transfer of ceramide-1-phosphate (C1P) between organelle membranes and the cell membrane. Required for normal structure of the Golgi stacks. Can bind phosphoceramides with a variety of aliphatic chains, but has a preference for lipids with saturated C16:0 or monounsaturated C18:1 aliphatic chains, and is inefficient with phosphoceramides containing lignoceryl (C24:0). Plays a role in the regulation of the cellular levels of ceramide-1-phosphate, and thereby contributes to the regulation of phospholipase PLA2G4A activity and the release of arachidonic acid. Has no activity with galactosylceramide, lactosylceramide, sphingomyelin, phosphatidylcholine, phosphatidic acid and ceramide. C1P transfer is stimulated by phosphatidylserine in C1P source vesicles. Regulates autophagy and pyroptosis, but not apoptosis. This Xenopus laevis (African clawed frog) protein is Ceramide-1-phosphate transfer protein (cptp).